Reading from the N-terminus, the 215-residue chain is Peptidyl-tRNA hydrolase (215 aa).

Tyrosine 35 is a binding site for tRNA. The active-site Proton acceptor is histidine 40. Residues tyrosine 86, asparagine 88, and asparagine 134 each coordinate tRNA.

It belongs to the PTH family. In terms of assembly, monomer.

Its subcellular location is the cytoplasm. The enzyme catalyses an N-acyl-L-alpha-aminoacyl-tRNA + H2O = an N-acyl-L-amino acid + a tRNA + H(+). Functionally, hydrolyzes ribosome-free peptidyl-tRNAs (with 1 or more amino acids incorporated), which drop off the ribosome during protein synthesis, or as a result of ribosome stalling. In terms of biological role, catalyzes the release of premature peptidyl moieties from peptidyl-tRNA molecules trapped in stalled 50S ribosomal subunits, and thus maintains levels of free tRNAs and 50S ribosomes. The chain is Peptidyl-tRNA hydrolase from Bordetella parapertussis (strain 12822 / ATCC BAA-587 / NCTC 13253).